A 397-amino-acid polypeptide reads, in one-letter code: Dual oxidase maturation factor 1 (397 aa).

The next 2 helical transmembrane spans lie at 26-46 (FVIF…LPGV) and 57-77 (YVLM…PCWA). An N-linked (GlcNAc...) asparagine glycan is attached at Asn-109. Helical transmembrane passes span 191-211 (AAIW…LFLP), 218-238 (ILAT…LSPC), and 261-281 (CFYL…GLGI). The segment at 324–376 (YGTNTTNSSRDKNDISSDKTAGSSGFQSRTSTCQSSASSASLRSQSSIETVHD) is disordered. Residues Asn-327 and Asn-330 are each glycosylated (N-linked (GlcNAc...) asparagine). Residues 341-350 (DKTAGSSGFQ) are compositionally biased toward polar residues. A compositionally biased stretch (low complexity) spans 351-370 (SRTSTCQSSASSASLRSQSS).

It belongs to the DUOXA family. As to quaternary structure, interacts with bli-3 and tsp-15. Interacts with csnk-1. As to expression, expressed in the hypodermis, specifically in seam cells, the terminal bulb of the pharynx, the distal region of the gonadal arm, vulva, spermatheca and uterus.

It is found in the membrane. In terms of biological role, plays a role in cuticle biogenesis. In complex with tsp-15 and the dual oxidase bli-3, promotes the generation of reactive oxygen species (ROS) and tyrosine cross-linking of collagen, thus stabilizing cuticular extracellular matrix. The chain is Dual oxidase maturation factor 1 from Caenorhabditis elegans.